The primary structure comprises 404 residues: Argininosuccinate synthase (404 aa).

ATP contacts are provided by residues 12-20 and Ala-39; that span reads AYSGGLDTS. L-citrulline contacts are provided by Tyr-91 and Ser-96. Residue Gly-121 coordinates ATP. L-aspartate contacts are provided by Thr-123, Asn-127, and Asp-128. Residue Asn-127 participates in L-citrulline binding. Residues Arg-131, Ser-180, Ser-189, Glu-265, and Tyr-277 each coordinate L-citrulline.

It belongs to the argininosuccinate synthase family. Type 1 subfamily. As to quaternary structure, homotetramer.

It is found in the cytoplasm. It carries out the reaction L-citrulline + L-aspartate + ATP = 2-(N(omega)-L-arginino)succinate + AMP + diphosphate + H(+). The protein operates within amino-acid biosynthesis; L-arginine biosynthesis; L-arginine from L-ornithine and carbamoyl phosphate: step 2/3. The sequence is that of Argininosuccinate synthase from Vibrio campbellii (strain ATCC BAA-1116).